Consider the following 135-residue polypeptide: Galectin-1 (135 aa).

Residue alanine 2 is modified to N-acetylalanine. Positions 4 to 135 (GLVASNLNLK…DFKIKCVAFE (132 aa)) constitute a Galectin domain. Lysine 13, lysine 19, and lysine 29 each carry N6-acetyllysine. Serine 30 is subject to Phosphoserine. A beta-D-galactoside-binding positions include 45 to 49 (HFNPR), histidine 53, asparagine 62, and 69 to 72 (WGAE). Lysine 128 bears the N6-acetyllysine mark.

In terms of assembly, homodimer. Binds LGALS3BP. Interacts with CD2, CD3, CD4, CD6, CD7, CD43, ALCAM and CD45. Interacts with laminin (via poly-N-acetyllactosamine). Interacts with SUSD2. Interacts with cargo receptor TMED10; the interaction mediates the translocation from the cytoplasm into the ERGIC (endoplasmic reticulum-Golgi intermediate compartment) and thereby secretion.

It localises to the secreted. It is found in the extracellular space. Its subcellular location is the extracellular matrix. The protein localises to the cytoplasm. Its function is as follows. Lectin that binds beta-galactoside and a wide array of complex carbohydrates. Plays a role in regulating apoptosis, cell proliferation and cell differentiation. Inhibits CD45 protein phosphatase activity and therefore the dephosphorylation of Lyn kinase. Strong inducer of T-cell apoptosis. This chain is Galectin-1 (LGALS1), found in Sus scrofa (Pig).